Consider the following 641-residue polypeptide: 1-deoxy-D-xylulose-5-phosphate synthase (641 aa).

Residues His-71 and 112-114 (SHA) contribute to the thiamine diphosphate site. A Mg(2+)-binding site is contributed by Asp-144. Thiamine diphosphate contacts are provided by residues 145–146 (GA), Asn-174, Tyr-285, and Glu-366. Residue Asn-174 coordinates Mg(2+).

Belongs to the transketolase family. DXPS subfamily. In terms of assembly, homodimer. Requires Mg(2+) as cofactor. It depends on thiamine diphosphate as a cofactor.

It catalyses the reaction D-glyceraldehyde 3-phosphate + pyruvate + H(+) = 1-deoxy-D-xylulose 5-phosphate + CO2. It functions in the pathway metabolic intermediate biosynthesis; 1-deoxy-D-xylulose 5-phosphate biosynthesis; 1-deoxy-D-xylulose 5-phosphate from D-glyceraldehyde 3-phosphate and pyruvate: step 1/1. In terms of biological role, catalyzes the acyloin condensation reaction between C atoms 2 and 3 of pyruvate and glyceraldehyde 3-phosphate to yield 1-deoxy-D-xylulose-5-phosphate (DXP). The protein is 1-deoxy-D-xylulose-5-phosphate synthase of Mycobacteroides abscessus (strain ATCC 19977 / DSM 44196 / CCUG 20993 / CIP 104536 / JCM 13569 / NCTC 13031 / TMC 1543 / L948) (Mycobacterium abscessus).